Reading from the N-terminus, the 23-residue chain is Thylakoid lumenal 17.4 kDa protein (23 aa).

The interval 1-23 (ANQRLPPLSNDPDRCERAFVGNT) is disordered.

Its subcellular location is the plastid. It is found in the chloroplast thylakoid lumen. The polypeptide is Thylakoid lumenal 17.4 kDa protein (Spinacia oleracea (Spinach)).